The following is a 185-amino-acid chain: Ribosome maturation factor RimP (185 aa).

This sequence belongs to the RimP family.

The protein resides in the cytoplasm. Required for maturation of 30S ribosomal subunits. This chain is Ribosome maturation factor RimP, found in Magnetococcus marinus (strain ATCC BAA-1437 / JCM 17883 / MC-1).